Consider the following 100-residue polypeptide: Urease subunit gamma (100 aa).

The protein belongs to the urease gamma subunit family. As to quaternary structure, heterotrimer of UreA (gamma), UreB (beta) and UreC (alpha) subunits. Three heterotrimers associate to form the active enzyme.

Its subcellular location is the cytoplasm. The catalysed reaction is urea + 2 H2O + H(+) = hydrogencarbonate + 2 NH4(+). It participates in nitrogen metabolism; urea degradation; CO(2) and NH(3) from urea (urease route): step 1/1. This is Urease subunit gamma from Paraburkholderia xenovorans (strain LB400).